The sequence spans 913 residues: MTDAITLPSQYDPKQTEAKWQQLWESSGVFHADPNHPGKPYCIVIPPPNVTGSLHMGHAFEHALIDVLIRYHRMIGRNVLWLPGTDHASIAVSTILDQQLQAEGTNRFALGREAYLKRAWAWKESSGKTIVGQIRRLGLSVDWSRERFTMDEGLSRAVLTAFNRLYEAGLIYRGQYLVNWCPASQSAVSDLEVENREVQGHLWYLRYPLTDGSGYLEVATTRPETMLGDTAVAVHPEDDRYRHLIGKTLRLPLMNREIPIIGDPLVDPTFGTGCVKVTPAHDPNDFVMGQRHRLPMMNLMNKDGTLNENAGEFAGLDRFVARKQVVARLEAEGFLVRVEDYKHTVPYSDRGKVPIEPLLSTQWFVKIRPLADAALKALDRQHSPRFIPDRWAKVYRDWLVNLRDWCISRQLWWGHQIPAWYVVSETNGEVRDDTPFVVAMDETAARAKAIAQFGEDIELQQDQDVLDTWFSSGLWPFSTLGWPDDTPDYRRYYPNTTLVTGFDIIFFWVARMTMMGQYFTGKIPFRDVYIHGLVRDENNKKMSKSANNGIDPLILIEKYGTDALRYSLVKEVVGAGQDIRLAYNRKTDESATVEAARNFANKLWNASRFVLLNLEGQTPGQLGTPRRQDLTASDRWILSRYHTAIQTTRERIESYGLGEAAKGLYEFIWGDFCDWYIELVKPRLQGENAKAKRTAQQVLATVLDGTLKLLHPFMPHITEEIWHTLHQVADNEVLAVQPYPKANRRAIDPDLEAQFSLLIETIRTIRNLRAEAGIKPGLYIAALIEASAEEAPIFEAGAADIQHLARLESLTIGSGLQIPQRVFSGVVGKSEVLIPLAGVVDLEALVSKLQKEGDRLRKEIQSLTARLNNPNFVNKAQPEVVAAAQAQLAAAQQQLAIIEHRLQSLGVDDKTQP.

The 'HIGH' region motif lies at 48–58; it reads PNVTGSLHMGH. Positions 541-545 match the 'KMSKS' region motif; it reads KMSKS. K544 contributes to the ATP binding site. Residues 839-907 are a coiled coil; that stretch reads VVDLEALVSK…IEHRLQSLGV (69 aa).

The protein belongs to the class-I aminoacyl-tRNA synthetase family. ValS type 1 subfamily. As to quaternary structure, monomer.

The protein resides in the cytoplasm. It catalyses the reaction tRNA(Val) + L-valine + ATP = L-valyl-tRNA(Val) + AMP + diphosphate. In terms of biological role, catalyzes the attachment of valine to tRNA(Val). As ValRS can inadvertently accommodate and process structurally similar amino acids such as threonine, to avoid such errors, it has a 'posttransfer' editing activity that hydrolyzes mischarged Thr-tRNA(Val) in a tRNA-dependent manner. The polypeptide is Valine--tRNA ligase (Thermosynechococcus vestitus (strain NIES-2133 / IAM M-273 / BP-1)).